The following is a 222-amino-acid chain: UPF0502 protein XCV4380 (222 aa).

This sequence belongs to the UPF0502 family.

This Xanthomonas euvesicatoria pv. vesicatoria (strain 85-10) (Xanthomonas campestris pv. vesicatoria) protein is UPF0502 protein XCV4380.